Consider the following 720-residue polypeptide: Glutaryl-7-aminocephalosporanic-acid acylase (720 aa).

Positions M1–A29 are cleaved as a signal peptide. A propeptide spans E188–G198 (spacer peptide). S199 serves as the catalytic Nucleophile. Residues H221 and E653 contribute to the active site.

Belongs to the peptidase S45 family. Heterodimer of a small subunit and a large subunit processed from the same precursor.

The protein localises to the periplasm. It catalyses the reaction (7R)-7-(4-carboxybutanamido)cephalosporanate + H2O = (7R)-7-aminocephalosporanate + glutarate. In terms of biological role, catalyzes the deacylation of 7 beta-(4-carboxybutanamido)cephalosporanic acid (glutaryl-7-aminocephalosporanic acid or GL-7-ACA) to 7-aminocephalosporanic acid (7-ACA). Cannot efficiently use cephalosporin C (CPC), penicillin G, or ampicillin as substrates. The polypeptide is Glutaryl-7-aminocephalosporanic-acid acylase (Brevundimonas diminuta (Pseudomonas diminuta)).